The chain runs to 957 residues: Exoribonuclease II, mitochondrial (957 aa).

A mitochondrion-targeting transit peptide spans 1–54 (MNYRQLFLLQNVNLESNYLLKRVCLSLKLSPCKLTRKFHHACPSSSKVLKYFRI). The 341-residue stretch at 503 to 843 (RVDLRHLKAF…FTHHQIQSVL (341 aa)) folds into the RNB domain.

This sequence belongs to the RNR ribonuclease family.

Its subcellular location is the mitochondrion. It catalyses the reaction Exonucleolytic cleavage in the 3'- to 5'-direction to yield nucleoside 5'-phosphates.. Required for intron-independent turnover and processing of mitochondrial RNA. Participates in 3'-mtRNA processing where it hydrolyzes single-stranded RNA or partially double-stranded RNA with 3'-single-stranded tails. The sequence is that of Exoribonuclease II, mitochondrial (rpm1) from Schizosaccharomyces pombe (strain 972 / ATCC 24843) (Fission yeast).